The following is a 612-amino-acid chain: Lipoma-preferred partner (612 aa).

Disordered regions lie at residues 1–118 (MSHP…SSLD) and 132–219 (ECSS…SSRP). A compositionally biased stretch (polar residues) spans 26–40 (THSFGNPSISVSTQQ). Residues 41 to 53 (PPKKFAPVVAPKP) show a composition bias toward low complexity. Position 108 is an N6-acetyllysine (K108). 2 positions are modified to phosphoserine: S116 and S151. Polar residues-rich tracts occupy residues 143-158 (QSST…STPV) and 171-181 (PLTATKKSTLK). The span at 183–193 (QPAPQAGPIPV) shows a compositional bias: pro residues. Positions 209–219 (SYTTASTSSRP) are enriched in polar residues. Y244 and Y301 each carry phosphotyrosine. The tract at residues 307–387 (YGGRNDSDPT…LGPSSVAPSF (81 aa)) is disordered. A compositionally biased stretch (polar residues) spans 314 to 323 (DPTYGQQGHP). K327 participates in a covalent cross-link: Glycyl lysine isopeptide (Lys-Gly) (interchain with G-Cter in SUMO1). A Phosphothreonine modification is found at T333. The residue at position 375 (S375) is a Phosphoserine. LIM zinc-binding domains lie at 414–473 (GRCA…INTL), 474–534 (EQCN…KFAP), and 535–603 (RCSV…RIRV).

The protein belongs to the zyxin/ajuba family. In terms of assembly, interacts with VASP, with PDZ domains of SCRIB and with ACTN1/alpha-actinin. In terms of tissue distribution, expressed in a wide variety of tissues but no or very low expression in brain and peripheral leukocytes.

The protein resides in the nucleus. It localises to the cytoplasm. It is found in the cell junction. The protein localises to the cell membrane. In terms of biological role, may play a structural role at sites of cell adhesion in maintaining cell shape and motility. In addition to these structural functions, it may also be implicated in signaling events and activation of gene transcription. May be involved in signal transduction from cell adhesion sites to the nucleus allowing successful integration of signals arising from soluble factors and cell-cell adhesion sites. Also suggested to serve as a scaffold protein upon which distinct protein complexes are assembled in the cytoplasm and in the nucleus. This is Lipoma-preferred partner (LPP) from Homo sapiens (Human).